Consider the following 204-residue polypeptide: ADP-ribosylation factor-like protein 15 (204 aa).

GTP-binding positions include 39-46 (GLTGSGKT), 82-86 (ELGGA), and 142-145 (NHQD).

It belongs to the small GTPase superfamily. Arf family.

The chain is ADP-ribosylation factor-like protein 15 (Arl15) from Mus musculus (Mouse).